We begin with the raw amino-acid sequence, 333 residues long: MIAVLFLAILCLEIDSTAPTLDPSLDVQWNEWRTKHGKAYNVNEERLRRAVWEKNFKMIELHNWEYLEGKHDFTMTMNAFGDLTNTEFVKMMTGFRRQKIKRMHVFQDHQFLYVPKYVDWRMLGYVTPVKNQGYCASSWAFSATGSLEGQMFKKTGRLVPLSEQNLLDCMGSNVTHDCSGGFMQNAFQYVKDNGGLATEESYPYIGPGRKCRYHAENSAANVRDFVQIPGREEALMKAVAKVGPISVAVDASHDSFQFYDSGIYYEPQCKRVHLNHAVLVVGYGFEGEESDGNSYWLVKNSWGEEWGMKGYIKIAKDWNNHCGIATLATYPIV.

An N-terminal signal peptide occupies residues 1–17 (MIAVLFLAILCLEIDST). 3 cysteine pairs are disulfide-bonded: cysteine 135/cysteine 178, cysteine 169/cysteine 211, and cysteine 269/cysteine 322. Asparagine 173 is a glycosylation site (N-linked (GlcNAc...) asparagine). Active-site residues include histidine 276 and asparagine 300.

The protein belongs to the peptidase C1 family. As to expression, expressed in testis and ovary. Low level in spleen, epididymis, kidney, and uterus. Expressed in primary cultures of Sertoli cells.

It is found in the secreted. This is Testin-2 from Mus musculus (Mouse).